Consider the following 174-residue polypeptide: Ly6/PLAUR domain-containing protein 6 (174 aa).

The first 22 residues, 1–22 (MEPWPLMAWGLMLTAITGWIKA), serve as a signal peptide directing secretion. The UPAR/Ly6 domain maps to 47 to 141 (FKCFTCEDAP…PRNETDAIFS (95 aa)). 6 disulfide bridges follow: cysteine 49/cysteine 77, cysteine 52/cysteine 61, cysteine 70/cysteine 96, cysteine 102/cysteine 121, cysteine 107/cysteine 118, and cysteine 122/cysteine 127. N-linked (GlcNAc...) asparagine glycosylation is found at asparagine 134 and asparagine 147. Serine 149 carries the GPI-anchor amidated serine lipid modification. Residues 150–174 (AQSTQTLPLLLLSVSITSLMLHSIN) constitute a propeptide, removed in mature form.

As to quaternary structure, interacts with fzd8 and lrp6.

It is found in the cell membrane. The protein resides in the membrane raft. Acts as an important regulator of embryogenesis through its enhancement of Wnt/beta-catenin signaling. Positively regulates Wnt/beta-catenin signaling by ensuring phosphorylation of lrp6 specifically in plasma membrane rafts and its subsequent internalization into signaling-competent vesicles. Essential for the wnt8-mediated patterning of the mesoderm and neuroectoderm during gastrulation. The chain is Ly6/PLAUR domain-containing protein 6 (lypd6) from Danio rerio (Zebrafish).